The sequence spans 419 residues: Tyrosine--tRNA ligase (419 aa).

Tyr34 is a binding site for L-tyrosine. Residues 39 to 48 (PTADSLHIGH) carry the 'HIGH' region motif. L-tyrosine-binding residues include Tyr169, Gln173, and Asp176. Residues 230–234 (KFGKT) carry the 'KMSKS' region motif. Lys233 contributes to the ATP binding site. In terms of domain architecture, S4 RNA-binding spans 352–419 (VPLVELLVSA…KKKYYLIRYA (68 aa)).

The protein belongs to the class-I aminoacyl-tRNA synthetase family. TyrS type 1 subfamily. In terms of assembly, homodimer.

Its subcellular location is the cytoplasm. It carries out the reaction tRNA(Tyr) + L-tyrosine + ATP = L-tyrosyl-tRNA(Tyr) + AMP + diphosphate + H(+). Catalyzes the attachment of tyrosine to tRNA(Tyr) in a two-step reaction: tyrosine is first activated by ATP to form Tyr-AMP and then transferred to the acceptor end of tRNA(Tyr). The polypeptide is Tyrosine--tRNA ligase (tyrS) (Geobacillus stearothermophilus (Bacillus stearothermophilus)).